Here is a 262-residue protein sequence, read N- to C-terminus: Acyl-[acyl-carrier-protein]--UDP-N-acetylglucosamine O-acyltransferase (262 aa).

It belongs to the transferase hexapeptide repeat family. LpxA subfamily. Homotrimer.

The protein resides in the cytoplasm. It catalyses the reaction a (3R)-hydroxyacyl-[ACP] + UDP-N-acetyl-alpha-D-glucosamine = a UDP-3-O-[(3R)-3-hydroxyacyl]-N-acetyl-alpha-D-glucosamine + holo-[ACP]. The protein operates within glycolipid biosynthesis; lipid IV(A) biosynthesis; lipid IV(A) from (3R)-3-hydroxytetradecanoyl-[acyl-carrier-protein] and UDP-N-acetyl-alpha-D-glucosamine: step 1/6. Its function is as follows. Involved in the biosynthesis of lipid A, a phosphorylated glycolipid that anchors the lipopolysaccharide to the outer membrane of the cell. The sequence is that of Acyl-[acyl-carrier-protein]--UDP-N-acetylglucosamine O-acyltransferase from Herminiimonas arsenicoxydans.